We begin with the raw amino-acid sequence, 429 residues long: Dihydroorotase (429 aa).

Residues H61 and H63 each contribute to the Zn(2+) site. Substrate-binding positions include H63–R65 and N95. Residues D153, H180, and H233 each contribute to the Zn(2+) site. Position 279 (N279) interacts with substrate. D306 contributes to the Zn(2+) binding site. The active site involves D306. Substrate is bound by residues H310 and F324 to G325.

This sequence belongs to the metallo-dependent hydrolases superfamily. DHOase family. Class I DHOase subfamily. Requires Zn(2+) as cofactor.

The catalysed reaction is (S)-dihydroorotate + H2O = N-carbamoyl-L-aspartate + H(+). Its pathway is pyrimidine metabolism; UMP biosynthesis via de novo pathway; (S)-dihydroorotate from bicarbonate: step 3/3. Catalyzes the reversible cyclization of carbamoyl aspartate to dihydroorotate. In Ligilactobacillus salivarius (strain UCC118) (Lactobacillus salivarius), this protein is Dihydroorotase.